We begin with the raw amino-acid sequence, 432 residues long: Adenylosuccinate synthetase (432 aa).

GTP contacts are provided by residues 12-18 (GDEGKGK) and 40-42 (GHT). Residue aspartate 13 is the Proton acceptor of the active site. Positions 13 and 40 each coordinate Mg(2+). IMP is bound by residues 13–16 (DEGK), 38–41 (NAGH), threonine 132, arginine 146, glutamine 226, threonine 241, and arginine 305. Histidine 41 acts as the Proton donor in catalysis. Residue 301 to 307 (TVTGRKR) participates in substrate binding. Residues arginine 307, 333–335 (KLD), and 415–417 (STS) contribute to the GTP site.

This sequence belongs to the adenylosuccinate synthetase family. In terms of assembly, homodimer. Requires Mg(2+) as cofactor.

It localises to the cytoplasm. It carries out the reaction IMP + L-aspartate + GTP = N(6)-(1,2-dicarboxyethyl)-AMP + GDP + phosphate + 2 H(+). It participates in purine metabolism; AMP biosynthesis via de novo pathway; AMP from IMP: step 1/2. Plays an important role in the de novo pathway of purine nucleotide biosynthesis. Catalyzes the first committed step in the biosynthesis of AMP from IMP. The protein is Adenylosuccinate synthetase of Sinorhizobium fredii (strain NBRC 101917 / NGR234).